Reading from the N-terminus, the 56-residue chain is Venom peptide 5 (56 aa).

Residues 1–26 (MKTASFILSFVVLLIVIITWIGEVSA) form the signal peptide. Positions 27 to 42 (VSEPEPVAKATAHAAA) are excised as a propeptide. Cysteine 49 and cysteine 54 are disulfide-bonded.

Probably contains 1 disulfide bond, which may be crucial for activity, since the linear peptide without disulfide bond is inactive. Expressed by the venom gland.

Its subcellular location is the secreted. This is Venom peptide 5 from Eumenes pomiformis (Potter wasp).